A 563-amino-acid polypeptide reads, in one-letter code: Endoglucanase B (563 aa).

The or 31 signal peptide spans Met1–Ala27. Residue Glu204 is the Proton donor of the active site. Residue Glu363 is the Nucleophile of the active site. A disordered region spans residues Ser476 to Thr495. The 67-residue stretch at Asp496–Tyr562 folds into the Dockerin domain.

Belongs to the glycosyl hydrolase 5 (cellulase A) family.

It catalyses the reaction Endohydrolysis of (1-&gt;4)-beta-D-glucosidic linkages in cellulose, lichenin and cereal beta-D-glucans.. Functionally, this enzyme catalyzes the endohydrolysis of 1,4-beta-glucosidic linkages in cellulose, lichenin and cereal beta-D-glucans. This is Endoglucanase B (celB) from Acetivibrio thermocellus (strain ATCC 27405 / DSM 1237 / JCM 9322 / NBRC 103400 / NCIMB 10682 / NRRL B-4536 / VPI 7372) (Clostridium thermocellum).